A 92-amino-acid polypeptide reads, in one-letter code: Small ribosomal subunit protein uS19 (92 aa).

It belongs to the universal ribosomal protein uS19 family.

Functionally, protein S19 forms a complex with S13 that binds strongly to the 16S ribosomal RNA. In Neisseria meningitidis serogroup C (strain 053442), this protein is Small ribosomal subunit protein uS19.